We begin with the raw amino-acid sequence, 232 residues long: MQVSDLFIREMPSDCLPRERLLAIGEKALSNQELLAILLRTGSKEADVMTVAATLLKQFKQLSYLQQATLNELMAIKGIGQVKAIELRAAIELGCRIYQSSQIKFGKVTSSQQVAQRLLQEMKGLQQEHLICIYLNTKNDIIQQKTIFKGSLNQSIAHPREIFREAVKYSSARILLAHNHPSGNPTPSPQDIQFTKRMEECGEMMGIQLLDHIILGDSGYISLREENFFASE.

The MPN domain occupies 107 to 229; sequence KVTSSQQVAQ…YISLREENFF (123 aa). Zn(2+) is bound by residues histidine 178, histidine 180, and aspartate 191. A JAMM motif motif is present at residues 178–191; the sequence is HNHPSGNPTPSPQD.

Belongs to the UPF0758 family.

The polypeptide is UPF0758 protein EF_2926 (Enterococcus faecalis (strain ATCC 700802 / V583)).